A 310-amino-acid polypeptide reads, in one-letter code: tRNA dimethylallyltransferase (310 aa).

13-20 (GPTASGKT) lines the ATP pocket. 15-20 (TASGKT) contacts substrate. 4 interaction with substrate tRNA regions span residues 38–41 (DSAL), 162–166 (QRLSR), 243–248 (RCVGYR), and 276–283 (KRQITWLR).

The protein belongs to the IPP transferase family. Monomer. Mg(2+) is required as a cofactor.

It carries out the reaction adenosine(37) in tRNA + dimethylallyl diphosphate = N(6)-dimethylallyladenosine(37) in tRNA + diphosphate. Its function is as follows. Catalyzes the transfer of a dimethylallyl group onto the adenine at position 37 in tRNAs that read codons beginning with uridine, leading to the formation of N6-(dimethylallyl)adenosine (i(6)A). The protein is tRNA dimethylallyltransferase of Aliivibrio fischeri (strain ATCC 700601 / ES114) (Vibrio fischeri).